Consider the following 902-residue polypeptide: Leucine-rich repeat-containing G-protein coupled receptor 5A (902 aa).

An N-terminal signal peptide occupies residues 1–22; it reads MDTSRTSLFLCSVLYSLQLVGS. Over 23-557 the chain is Extracellular; it reads ARPGKQHRSC…DHLFGSWLTR (535 aa). 2 cysteine pairs are disulfide-bonded: Cys32–Cys38 and Cys36–Cys49. Positions 32-61 constitute an LRRNT domain; it reads CPTPCECEQDGMLVRVDCSDRGLTGLPRNI. LRR repeat units lie at residues 41–61, 62–85, 86–109, 111–133, 134–157, 159–181, 182–205, 207–229, 230–253, 254–276, 278–300, 301–324, 325–347, 348–372, 374–393, 394–417, and 418–441; these read DGML…PRNI, SIFT…ALHN, LHFL…AFAG, GSLK…ALQN, LRSL…SFNG, FSLR…ALES, LSAL…AFGN, SSLV…CFDG, LHSL…IKTL, KNLK…AFIG, PSLI…AFQH, LPEL…LTGT, TSLE…VCNQ, LPNL…GCQR, QKID…TFQQ, LVGL…SFSS, and LPSL…GLHG. N-linked (GlcNAc...) asparagine glycosylation is found at Asn60 and Asn74. Asn205 is a glycosylation site (N-linked (GlcNAc...) asparagine). Cys345 and Cys370 are oxidised to a cystine. Cys476 and Cys537 are joined by a disulfide. Asn496 is a glycosylation site (N-linked (GlcNAc...) asparagine). A helical transmembrane segment spans residues 558–578; it reads IGVWLIVLLSFVCNALVIATV. Over 579–589 the chain is Cytoplasmic; it reads FRPLSYVPSIK. The chain crosses the membrane as a helical span at residues 590–610; sequence LLIGLIAIINTLMGLSSGVLA. Residues 598–619 form an LRR 18 repeat; sequence INTLMGLSSGVLATVDALTFGN. Residues 611–634 lie on the Extracellular side of the membrane; that stretch reads TVDALTFGNFAQYGAWWESGVGCQ. Cys633 and Cys708 are disulfide-bonded. The helical transmembrane segment at 635–655 threads the bilayer; the sequence is ITGFLSVFAAETSVFLLTVAA. Residues 656–678 lie on the Cytoplasmic side of the membrane; sequence LERGFSIKCTTKFETKSSFLSVK. Residues 679 to 699 traverse the membrane as a helical segment; sequence LSIVFCFLLSIIIAVSPLMSG. Residues 700-718 lie on the Extracellular side of the membrane; the sequence is STYGTSPFCFPLLFGDPSS. A helical membrane pass occupies residues 719–739; the sequence is MVFMVALVLLNSLCFLVMTVA. Residues 740–763 lie on the Cytoplasmic side of the membrane; that stretch reads YTKLYCSLEKGELENVWDCSMVKH. A helical transmembrane segment spans residues 764 to 784; it reads IALLLFTNCILYCPVAFLSFS. Topologically, residues 785–798 are extracellular; that stretch reads SLLNLTFISPEVNK. N-linked (GlcNAc...) asparagine glycosylation is found at Asn788 and Asn797. Residues 799 to 819 traverse the membrane as a helical segment; sequence SILLLIIPLPACLNPLLYILF. Topologically, residues 820–902 are cytoplasmic; the sequence is NPHFKEDIGS…LSAVAFVPCH (83 aa).

It belongs to the G-protein coupled receptor 1 family. In terms of tissue distribution, expressed in the developing epithelial stem cells of the intestine.

It is found in the cell membrane. The protein resides in the golgi apparatus. It localises to the trans-Golgi network membrane. Receptor for R-spondins that potentiates the canonical Wnt signaling pathway and acts as a stem cell marker of the intestinal epithelium and the hair follicle. Upon binding to R-spondins (RSPO1, RSPO2, RSPO3 or RSPO4), associates with phosphorylated LRP6 and frizzled receptors that are activated by extracellular Wnt receptors, triggering the canonical Wnt signaling pathway to increase expression of target genes. In contrast to classical G-protein coupled receptors, does not activate heterotrimeric G-proteins to transduce the signal. Involved in the development and/or maintenance of the adult intestinal stem cells during postembryonic development. This is Leucine-rich repeat-containing G-protein coupled receptor 5A (lgr5-a) from Xenopus laevis (African clawed frog).